Here is a 510-residue protein sequence, read N- to C-terminus: Holliday junction branch migration ATPase PINA (510 aa).

Homohexamer. Interacts with Holliday junction resolvase Hjc, interacts with helicase Hjm (Hel308).

It catalyses the reaction ATP + H2O = ADP + phosphate + H(+). Important for growth at low temperatures (less than 65 degrees Celsius in this organism). Promotes Holliday junction (HJ) branch migration and unwinds Y-shaped DNA (but not replication forks or dsDNA) in an ATP hydrolysis-dependent manner. Stimulates cleavage by HJ resolvase Hjc. Hjc, Hjm (Hel308) and PINA coordinate HJ migration and cleavage of replication forks in a coordinated way. Probably acts as an ATP-dependent pump that pulls DNA through the hexamer. The polypeptide is Holliday junction branch migration ATPase PINA (Sulfolobus acidocaldarius (strain ATCC 33909 / DSM 639 / JCM 8929 / NBRC 15157 / NCIMB 11770)).